Reading from the N-terminus, the 361-residue chain is MLLWLFQQLGEDIRAFNVFNYLTLRAVLAALTALTISFIVGPAVIRKLTALKIGQSVRSDGPQTHLVKAGTPTMGGALILVSVAVTTLLWADLSNDYVWLALMTLLGFGVIGWVDDWRKVVEKNSRGLASRWKYFWQSAIGLVVAVYLWQTASLPAHTELIIPFLKQATFGLSAAAFIALTYFVIVGASNAVNLTDGLDGLAILPTVMVASALAIFAYVAGNAVFSKYLGVPFVPGAGELAIFCAAMAGAGLAFLWFNAYPAEVFMGDVGALALGAALGVVAVVVRQEIILFIMCGVFVMETLSVMIQVASFKLTGKRVFRMAPIHHHYELKGWKENQVVVRFWIISMMLVLIGLSSLKLR.

10 consecutive transmembrane segments (helical) span residues arginine 25 to isoleucine 45, threonine 73 to leucine 93, tyrosine 97 to tryptophan 117, tyrosine 134 to leucine 154, alanine 168 to alanine 188, glycine 200 to alanine 220, alanine 237 to phenylalanine 257, valine 264 to valine 284, isoleucine 289 to valine 309, and glutamine 338 to leucine 358.

It belongs to the glycosyltransferase 4 family. MraY subfamily. Mg(2+) serves as cofactor.

It is found in the cell inner membrane. It catalyses the reaction UDP-N-acetyl-alpha-D-muramoyl-L-alanyl-gamma-D-glutamyl-meso-2,6-diaminopimeloyl-D-alanyl-D-alanine + di-trans,octa-cis-undecaprenyl phosphate = di-trans,octa-cis-undecaprenyl diphospho-N-acetyl-alpha-D-muramoyl-L-alanyl-D-glutamyl-meso-2,6-diaminopimeloyl-D-alanyl-D-alanine + UMP. It participates in cell wall biogenesis; peptidoglycan biosynthesis. Catalyzes the initial step of the lipid cycle reactions in the biosynthesis of the cell wall peptidoglycan: transfers peptidoglycan precursor phospho-MurNAc-pentapeptide from UDP-MurNAc-pentapeptide onto the lipid carrier undecaprenyl phosphate, yielding undecaprenyl-pyrophosphoryl-MurNAc-pentapeptide, known as lipid I. This Thiobacillus denitrificans (strain ATCC 25259 / T1) protein is Phospho-N-acetylmuramoyl-pentapeptide-transferase.